A 233-amino-acid chain; its full sequence is Nickel import system ATP-binding protein NikE (233 aa).

In terms of domain architecture, ABC transporter spans 2–228; sequence IELKHVTFGY…DRHSYTKELV (227 aa). 35–42 is an ATP binding site; the sequence is GESGCGKS.

Belongs to the ABC transporter superfamily. In terms of assembly, the complex is composed of two ATP-binding proteins (NikD and NikE), two transmembrane proteins (NikB and NikC) and a solute-binding protein (NikA).

The protein resides in the cell membrane. It catalyses the reaction Ni(2+)(out) + ATP + H2O = Ni(2+)(in) + ADP + phosphate + H(+). Functionally, part of the ABC transporter complex NikABCDE (Opp2) involved in nickel import. Probably responsible for energy coupling to the transport system. In Staphylococcus aureus (strain bovine RF122 / ET3-1), this protein is Nickel import system ATP-binding protein NikE.